The following is a 459-amino-acid chain: Spermatogenesis-associated protein 1 (459 aa).

Over residues 193 to 205 (LKELPNKNQEEAG) the composition is skewed to basic and acidic residues. The tract at residues 193-213 (LKELPNKNQEEAGGKATAEKS) is disordered. 2 coiled-coil regions span residues 287–374 (TDIS…YKKL) and 400–453 (LIIQ…KKII).

As to quaternary structure, interacts with IFT20.

It is found in the cytoplasmic vesicle. The protein resides in the secretory vesicle. The protein localises to the acrosome. This Homo sapiens (Human) protein is Spermatogenesis-associated protein 1 (SPATA1).